Reading from the N-terminus, the 314-residue chain is Ferredoxin:CoB-CoM heterodisulfide reductase subunit B (314 aa).

Belongs to the HdrB family. The ferredoxin:CoB-CoM heterodisulfide reductase is composed of three subunits; HdrA1, HdrB1 and HdrC1. It depends on [4Fe-4S] cluster as a cofactor.

The protein localises to the cytoplasm. It carries out the reaction coenzyme B + coenzyme M + 2 oxidized [2Fe-2S]-[ferredoxin] = coenzyme M-coenzyme B heterodisulfide + 2 reduced [2Fe-2S]-[ferredoxin] + 2 H(+). It functions in the pathway cofactor metabolism; coenzyme M-coenzyme B heterodisulfide reduction; coenzyme B and coenzyme M from coenzyme M-coenzyme B heterodisulfide: step 1/1. Its function is as follows. Part of a complex that catalyzes the reversible reduction of CoM-S-S-CoB to the thiol-coenzymes H-S-CoM (coenzyme M) and H-S-CoB (coenzyme B). Probably involved in methylotrophic methanogenesis but not in aceticlastic methanogenesis. This Methanosarcina acetivorans (strain ATCC 35395 / DSM 2834 / JCM 12185 / C2A) protein is Ferredoxin:CoB-CoM heterodisulfide reductase subunit B.